The following is a 737-amino-acid chain: tRNA-dihydrouridine(47) synthase [NAD(P)(+)] (737 aa).

Composition is skewed to basic and acidic residues over residues 1-11 and 24-33; these read MESQETAKRPI and PATKRVKLDD. Residues 1 to 127 are disordered; sequence MESQETAKRP…GKKKRPKGQN (127 aa). Low complexity predominate over residues 35-44; that stretch reads PVPQIQEEPS. A compositionally biased stretch (basic and acidic residues) spans 57–82; that stretch reads EDEKPTEQRQDDRDKRRGIAPIKKEY. 2 consecutive C3H1-type zinc fingers follow at residues 142 to 166 and 187 to 208; these read CNSVAWTPEFSPRHCKHGERCNALH and CPVWETHGKCSSGWRCLFVESH. Residues 332 to 334 and glutamine 407 each bind FMN; that span reads PLT. Cysteine 439 serves as the catalytic Proton donor. FMN contacts are provided by residues lysine 479, histidine 520, 577-579, and 601-602; these read NGD and GR.

Belongs to the Dus family. Dus3 subfamily. It depends on FMN as a cofactor.

It localises to the cytoplasm. The protein localises to the nucleus. It carries out the reaction 5,6-dihydrouridine(47) in tRNA + NAD(+) = uridine(47) in tRNA + NADH + H(+). The enzyme catalyses 5,6-dihydrouridine(47) in tRNA + NADP(+) = uridine(47) in tRNA + NADPH + H(+). It catalyses the reaction a 5,6-dihydrouridine in mRNA + NAD(+) = a uridine in mRNA + NADH + H(+). The catalysed reaction is a 5,6-dihydrouridine in mRNA + NADP(+) = a uridine in mRNA + NADPH + H(+). Functionally, catalyzes the synthesis of dihydrouridine, a modified base found in the D-loop of most tRNAs. Specifically modifies U47 in cytoplasmic tRNAs. Catalyzes the synthesis of dihydrouridine in some mRNAs, thereby affecting their translation. The polypeptide is tRNA-dihydrouridine(47) synthase [NAD(P)(+)] (dus-3) (Neurospora crassa (strain ATCC 24698 / 74-OR23-1A / CBS 708.71 / DSM 1257 / FGSC 987)).